Reading from the N-terminus, the 394-residue chain is NAD(P)H-quinone oxidoreductase subunit H (394 aa).

This sequence belongs to the complex I 49 kDa subunit family. NDH-1 can be composed of about 15 different subunits; different subcomplexes with different compositions have been identified which probably have different functions.

It localises to the cellular thylakoid membrane. The enzyme catalyses a plastoquinone + NADH + (n+1) H(+)(in) = a plastoquinol + NAD(+) + n H(+)(out). The catalysed reaction is a plastoquinone + NADPH + (n+1) H(+)(in) = a plastoquinol + NADP(+) + n H(+)(out). NDH-1 shuttles electrons from an unknown electron donor, via FMN and iron-sulfur (Fe-S) centers, to quinones in the respiratory and/or the photosynthetic chain. The immediate electron acceptor for the enzyme in this species is believed to be plastoquinone. Couples the redox reaction to proton translocation, and thus conserves the redox energy in a proton gradient. Cyanobacterial NDH-1 also plays a role in inorganic carbon-concentration. In Prochlorococcus marinus (strain MIT 9211), this protein is NAD(P)H-quinone oxidoreductase subunit H.